A 358-amino-acid polypeptide reads, in one-letter code: Trace amine-associated receptor 7h (358 aa).

The Extracellular portion of the chain corresponds to 1-47 (MATDDESFPWDQDSILSRDLLSALSPQLCYENLNRSCVRSPYSPGPR). A glycan (N-linked (GlcNAc...) asparagine) is linked at Asn34. 2 disulfides stabilise this stretch: Cys37/Cys201 and Cys120/Cys205. A helical membrane pass occupies residues 48–68 (LILYAVFGFGAVLAVCGNLLV). Over 69 to 83 (MTSILHFRQLHSPAN) the chain is Cytoplasmic. Residues 84-104 (FLVASLACADLLVGLTVMPFS) form a helical membrane-spanning segment. The Extracellular segment spans residues 105–125 (MVRSVEGCWYFGDSYCKLHTS). Residues 126–143 (FDMSFCCSSLLHLCFISV) traverse the membrane as a helical segment. Over 144 to 166 (DRYIAVSDPLIYPIRFTASVSGK) the chain is Cytoplasmic. Residues 167–187 (CITFSWFLSIIYGFSLIYTGA) traverse the membrane as a helical segment. Residues 188–217 (SEAGLKDLVSALSCVGGCQIPMNQSCVLIN) are Extracellular-facing. N-linked (GlcNAc...) asparagine glycosylation is present at Asn210. Residues 218–238 (FLLFLVPTLVMMTVYSKIFLI) traverse the membrane as a helical segment. Residues 239 to 274 (AKQQAQNMEKMSKQTTRASDSYKDRVAKRERKAAKT) are Cytoplasmic-facing. The helical transmembrane segment at 275-295 (LGIAVAAFLLSWLPYLIDSII) threads the bilayer. Residues 296 to 309 (DAFLGFITPSYVYE) are Extracellular-facing. A helical membrane pass occupies residues 310–333 (ILVWIVYYNSAMNPLIYAFFYPWF). Over 334–358 (RNAIKLIVTGKILKQNSSTTNLFSE) the chain is Cytoplasmic.

The protein belongs to the G-protein coupled receptor 1 family.

The protein resides in the cell membrane. Olfactory receptor specific for N,N-dimethylalkylamines trace amines. Trace amine compounds are enriched in animal body fluids and act on trace amine-associated receptors (TAARs) to elicit both intraspecific and interspecific innate behaviors. Ligand-binding causes a conformation change that triggers signaling via G(s)-class of G alpha proteins (GNAL or GNAS). In Rattus norvegicus (Rat), this protein is Trace amine-associated receptor 7h.